The primary structure comprises 655 residues: Kelch-like protein 13 (655 aa).

In terms of domain architecture, BTB spans 92 to 161 (CDVTLMPGDT…IYTAKLSLNM (70 aa)). Residues 196–297 (CVEVGRIANT…TPQELINYVQ (102 aa)) enclose the BACK domain. Kelch repeat units lie at residues 341 to 389 (HLVT…VIGN), 390 to 441 (FLYV…ALKG), 442 to 488 (YLYA…VYGG), 490 to 535 (MYIS…TVGE), 537 to 587 (LYVI…VFEN), and 588 to 636 (KIYV…TLTV).

In terms of assembly, component of the BCR(KLHL9-KLHL13) E3 ubiquitin ligase complex, at least composed of CUL3, KLHL9, KLHL13 and RBX1. Interacts with AURKB.

It functions in the pathway protein modification; protein ubiquitination. Its function is as follows. Substrate-specific adapter of a BCR (BTB-CUL3-RBX1) E3 ubiquitin-protein ligase complex required for mitotic progression and cytokinesis. The BCR(KLHL9-KLHL13) E3 ubiquitin ligase complex mediates the ubiquitination of AURKB and controls the dynamic behavior of AURKB on mitotic chromosomes and thereby coordinates faithful mitotic progression and completion of cytokinesis. The protein is Kelch-like protein 13 (KLHL13) of Bos taurus (Bovine).